Consider the following 319-residue polypeptide: 4-hydroxy-3-methylbut-2-enyl diphosphate reductase (319 aa).

Residue cysteine 18 participates in [4Fe-4S] cluster binding. (2E)-4-hydroxy-3-methylbut-2-enyl diphosphate contacts are provided by histidine 47 and histidine 81. Dimethylallyl diphosphate contacts are provided by histidine 47 and histidine 81. Residues histidine 47 and histidine 81 each contribute to the isopentenyl diphosphate site. Position 103 (cysteine 103) interacts with [4Fe-4S] cluster. Histidine 131 lines the (2E)-4-hydroxy-3-methylbut-2-enyl diphosphate pocket. Histidine 131 contributes to the dimethylallyl diphosphate binding site. Histidine 131 contacts isopentenyl diphosphate. Glutamate 133 serves as the catalytic Proton donor. (2E)-4-hydroxy-3-methylbut-2-enyl diphosphate is bound at residue threonine 172. Residue cysteine 202 participates in [4Fe-4S] cluster binding. Residues serine 230, serine 231, asparagine 232, and serine 275 each coordinate (2E)-4-hydroxy-3-methylbut-2-enyl diphosphate. Residues serine 230, serine 231, asparagine 232, and serine 275 each contribute to the dimethylallyl diphosphate site. Residues serine 230, serine 231, asparagine 232, and serine 275 each contribute to the isopentenyl diphosphate site.

The protein belongs to the IspH family. Requires [4Fe-4S] cluster as cofactor.

It catalyses the reaction isopentenyl diphosphate + 2 oxidized [2Fe-2S]-[ferredoxin] + H2O = (2E)-4-hydroxy-3-methylbut-2-enyl diphosphate + 2 reduced [2Fe-2S]-[ferredoxin] + 2 H(+). It carries out the reaction dimethylallyl diphosphate + 2 oxidized [2Fe-2S]-[ferredoxin] + H2O = (2E)-4-hydroxy-3-methylbut-2-enyl diphosphate + 2 reduced [2Fe-2S]-[ferredoxin] + 2 H(+). It functions in the pathway isoprenoid biosynthesis; dimethylallyl diphosphate biosynthesis; dimethylallyl diphosphate from (2E)-4-hydroxy-3-methylbutenyl diphosphate: step 1/1. Its pathway is isoprenoid biosynthesis; isopentenyl diphosphate biosynthesis via DXP pathway; isopentenyl diphosphate from 1-deoxy-D-xylulose 5-phosphate: step 6/6. Catalyzes the conversion of 1-hydroxy-2-methyl-2-(E)-butenyl 4-diphosphate (HMBPP) into a mixture of isopentenyl diphosphate (IPP) and dimethylallyl diphosphate (DMAPP). Acts in the terminal step of the DOXP/MEP pathway for isoprenoid precursor biosynthesis. The chain is 4-hydroxy-3-methylbut-2-enyl diphosphate reductase from Methylocella silvestris (strain DSM 15510 / CIP 108128 / LMG 27833 / NCIMB 13906 / BL2).